The following is a 304-amino-acid chain: Glutaminase (304 aa).

Substrate-binding residues include S63, N114, E158, N165, Y189, Y240, and V258.

The protein belongs to the glutaminase family. Homotetramer.

It catalyses the reaction L-glutamine + H2O = L-glutamate + NH4(+). The protein is Glutaminase of Shewanella baltica (strain OS223).